A 381-amino-acid chain; its full sequence is RING-H2 finger protein ATL1 (381 aa).

The interval 1-31 (MDLTDRRNPFNNLVFPPPPPPPSTTFTSPIF) is disordered. Residues 46–66 (IAVIGILATAFLLVSYYIFVI) form a helical membrane-spanning segment. The segment at 134 to 176 (CSVCLNEFQEDEKLRIIPNCCHVFHIDCIDIWLQGNANCPLCR) adopts an RING-type; atypical zinc-finger fold. Disordered stretches follow at residues 249–269 (TSNEVSTGNSPKSVSPLPIKF) and 334–354 (RQIPVAGDGEDSSSSGGGNSR). Residues 250-261 (SNEVSTGNSPKS) show a composition bias toward polar residues.

Belongs to the RING-type zinc finger family. ATL subfamily.

It is found in the membrane. The catalysed reaction is S-ubiquitinyl-[E2 ubiquitin-conjugating enzyme]-L-cysteine + [acceptor protein]-L-lysine = [E2 ubiquitin-conjugating enzyme]-L-cysteine + N(6)-ubiquitinyl-[acceptor protein]-L-lysine.. Its pathway is protein modification; protein ubiquitination. The polypeptide is RING-H2 finger protein ATL1 (ATL1) (Arabidopsis thaliana (Mouse-ear cress)).